The chain runs to 214 residues: Phosphatidylserine decarboxylase proenzyme (214 aa).

The active-site Schiff-base intermediate with substrate; via pyruvic acid is the Ser182. Ser182 carries the post-translational modification Pyruvic acid (Ser); by autocatalysis.

It belongs to the phosphatidylserine decarboxylase family. PSD-A subfamily. As to quaternary structure, heterodimer of a large membrane-associated beta subunit and a small pyruvoyl-containing alpha subunit. Pyruvate serves as cofactor. Is synthesized initially as an inactive proenzyme. Formation of the active enzyme involves a self-maturation process in which the active site pyruvoyl group is generated from an internal serine residue via an autocatalytic post-translational modification. Two non-identical subunits are generated from the proenzyme in this reaction, and the pyruvate is formed at the N-terminus of the alpha chain, which is derived from the carboxyl end of the proenzyme. The post-translation cleavage follows an unusual pathway, termed non-hydrolytic serinolysis, in which the side chain hydroxyl group of the serine supplies its oxygen atom to form the C-terminus of the beta chain, while the remainder of the serine residue undergoes an oxidative deamination to produce ammonia and the pyruvoyl prosthetic group on the alpha chain.

Its subcellular location is the cell membrane. It catalyses the reaction a 1,2-diacyl-sn-glycero-3-phospho-L-serine + H(+) = a 1,2-diacyl-sn-glycero-3-phosphoethanolamine + CO2. It functions in the pathway phospholipid metabolism; phosphatidylethanolamine biosynthesis; phosphatidylethanolamine from CDP-diacylglycerol: step 2/2. Catalyzes the formation of phosphatidylethanolamine (PtdEtn) from phosphatidylserine (PtdSer). This is Phosphatidylserine decarboxylase proenzyme from Burkholderia cenocepacia (strain HI2424).